Here is a 131-residue protein sequence, read N- to C-terminus: Dihydroneopterin aldolase 2 (131 aa).

Substrate-binding positions include Glu-29, Tyr-61, and 80–81 (LE). Lys-107 acts as the Proton donor/acceptor in catalysis.

This sequence belongs to the DHNA family. In terms of assembly, homooctamer. Forms a hollow cylinder assembled from two ring-shaped tetramers. As to expression, expressed in roots, leaves, stems and siliques.

The enzyme catalyses 7,8-dihydroneopterin = 6-hydroxymethyl-7,8-dihydropterin + glycolaldehyde. It participates in cofactor biosynthesis; tetrahydrofolate biosynthesis; 2-amino-4-hydroxy-6-hydroxymethyl-7,8-dihydropteridine diphosphate from 7,8-dihydroneopterin triphosphate: step 3/4. Functionally, catalyzes the conversion of 7,8-dihydroneopterin into 6-hydroxymethyl-7,8-dihydropterin, a biosynthetic precursor of the vitamin tetrahydrofolate. Can use L-threo-dihydroneopterin and D-erythro-dihydroneopterin as substrates for the formation of 6-hydroxymethyldihydropterin, but it can also catalyze the epimerization of carbon 2' of dihydroneopterin and dihydromonapterin. The sequence is that of Dihydroneopterin aldolase 2 from Arabidopsis thaliana (Mouse-ear cress).